The chain runs to 201 residues: MAEKFIKHTGLVVPLDAANVDTDAIIPKQFLQKVTRTGFGAHLFNDWRFLDEKGQQPNPDFVLNFPQYQGASILLARENFGCGSSREHAPWALTDYGFKVVIAPSFADIFYGNSFNNQLLPVKLSDAEVDELFALVQANPGIHFDVDLEAQEVKAGEKTYRFTIDAFRRHCMMNGLDSIGLTLQHDDAIASYEEKQPAFMR.

It belongs to the LeuD family. LeuD type 1 subfamily. In terms of assembly, heterodimer of LeuC and LeuD.

It carries out the reaction (2R,3S)-3-isopropylmalate = (2S)-2-isopropylmalate. It functions in the pathway amino-acid biosynthesis; L-leucine biosynthesis; L-leucine from 3-methyl-2-oxobutanoate: step 2/4. In terms of biological role, catalyzes the isomerization between 2-isopropylmalate and 3-isopropylmalate, via the formation of 2-isopropylmaleate. This is 3-isopropylmalate dehydratase small subunit from Escherichia coli O127:H6 (strain E2348/69 / EPEC).